The primary structure comprises 477 residues: Ribulose bisphosphate carboxylase large chain (477 aa).

The propeptide occupies 1–2 (MS). Residue proline 3 is modified to N-acetylproline. Lysine 14 is subject to N6,N6,N6-trimethyllysine. Substrate-binding residues include asparagine 123 and threonine 173. The active-site Proton acceptor is the lysine 175. Residue lysine 177 coordinates substrate. Positions 201, 203, and 204 each coordinate Mg(2+). Position 201 is an N6-carboxylysine (lysine 201). The active-site Proton acceptor is the histidine 294. Arginine 295, histidine 327, and serine 379 together coordinate substrate.

Belongs to the RuBisCO large chain family. Type I subfamily. As to quaternary structure, heterohexadecamer of 8 large chains and 8 small chains; disulfide-linked. The disulfide link is formed within the large subunit homodimers. Requires Mg(2+) as cofactor. Post-translationally, the disulfide bond which can form in the large chain dimeric partners within the hexadecamer appears to be associated with oxidative stress and protein turnover.

The protein localises to the plastid. It is found in the chloroplast. It carries out the reaction 2 (2R)-3-phosphoglycerate + 2 H(+) = D-ribulose 1,5-bisphosphate + CO2 + H2O. The enzyme catalyses D-ribulose 1,5-bisphosphate + O2 = 2-phosphoglycolate + (2R)-3-phosphoglycerate + 2 H(+). Its function is as follows. RuBisCO catalyzes two reactions: the carboxylation of D-ribulose 1,5-bisphosphate, the primary event in carbon dioxide fixation, as well as the oxidative fragmentation of the pentose substrate in the photorespiration process. Both reactions occur simultaneously and in competition at the same active site. The protein is Ribulose bisphosphate carboxylase large chain (rbcL) of Solanum tuberosum (Potato).